We begin with the raw amino-acid sequence, 238 residues long: tRNA (guanine-N(1)-)-methyltransferase (238 aa).

132–137 (IGDYVL) is a binding site for S-adenosyl-L-methionine.

The protein belongs to the RNA methyltransferase TrmD family. As to quaternary structure, homodimer.

Its subcellular location is the cytoplasm. It carries out the reaction guanosine(37) in tRNA + S-adenosyl-L-methionine = N(1)-methylguanosine(37) in tRNA + S-adenosyl-L-homocysteine + H(+). In terms of biological role, specifically methylates guanosine-37 in various tRNAs. The sequence is that of tRNA (guanine-N(1)-)-methyltransferase from Nitrobacter hamburgensis (strain DSM 10229 / NCIMB 13809 / X14).